Consider the following 107-residue polypeptide: Large ribosomal subunit protein uL24 (107 aa).

This sequence belongs to the universal ribosomal protein uL24 family. As to quaternary structure, part of the 50S ribosomal subunit.

One of two assembly initiator proteins, it binds directly to the 5'-end of the 23S rRNA, where it nucleates assembly of the 50S subunit. In terms of biological role, one of the proteins that surrounds the polypeptide exit tunnel on the outside of the subunit. The sequence is that of Large ribosomal subunit protein uL24 from Carboxydothermus hydrogenoformans (strain ATCC BAA-161 / DSM 6008 / Z-2901).